Reading from the N-terminus, the 68-residue chain is Copper transport protein ATOX1 (68 aa).

Residues 1–63 (MPKHEFSVDM…TLNKTGKAVS (63 aa)) form the HMA domain. Residues Cys12 and Cys15 each coordinate Cu cation. Ser47 carries the phosphoserine modification. Position 60 is an N6-acetyllysine (Lys60).

The protein belongs to the ATX1 family. Homodimer. Interacts with ATP7B. Interacts with ATP7A. Interacts (via dimer form) with SLC31A1 (via C-terminal domain); this interaction improves ATOX1 stability and controls intracellular Cu(I) levels.

Functionally, binds and deliver cytosolic copper to the copper ATPase proteins. May be important in cellular antioxidant defense. This chain is Copper transport protein ATOX1, found in Mus musculus (Mouse).